Consider the following 396-residue polypeptide: Phosphoglycerate kinase (396 aa).

Residues 21 to 23, Arg-36, 59 to 62, Arg-119, and Arg-156 each bind substrate; these read DFN and HLGK. ATP is bound by residues Lys-206, Glu-325, and 352 to 355; that span reads GGDS.

Belongs to the phosphoglycerate kinase family. Monomer.

The protein localises to the cytoplasm. It catalyses the reaction (2R)-3-phosphoglycerate + ATP = (2R)-3-phospho-glyceroyl phosphate + ADP. The protein operates within carbohydrate degradation; glycolysis; pyruvate from D-glyceraldehyde 3-phosphate: step 2/5. The protein is Phosphoglycerate kinase of Staphylococcus carnosus (strain TM300).